The sequence spans 347 residues: Holliday junction branch migration complex subunit RuvB (347 aa).

The large ATPase domain (RuvB-L) stretch occupies residues 1-185; it reads MSDDPTTPEL…FGFTAHLEFY (185 aa). Residues L24, R25, G66, K69, T70, T71, 132 to 134, R175, Y185, and R222 contribute to the ATP site; that span reads EDF. A Mg(2+)-binding site is contributed by T70. The small ATPAse domain (RuvB-S) stretch occupies residues 186-255; it reads DEGELAQVLA…AVHAALELYD (70 aa). Residues 258–347 form a head domain (RuvB-H) region; the sequence is ELGLDRLDRA…SQPPSLMDDL (90 aa). DNA is bound by residues R313 and R318.

It belongs to the RuvB family. As to quaternary structure, homohexamer. Forms an RuvA(8)-RuvB(12)-Holliday junction (HJ) complex. HJ DNA is sandwiched between 2 RuvA tetramers; dsDNA enters through RuvA and exits via RuvB. An RuvB hexamer assembles on each DNA strand where it exits the tetramer. Each RuvB hexamer is contacted by two RuvA subunits (via domain III) on 2 adjacent RuvB subunits; this complex drives branch migration. In the full resolvosome a probable DNA-RuvA(4)-RuvB(12)-RuvC(2) complex forms which resolves the HJ.

It localises to the cytoplasm. The enzyme catalyses ATP + H2O = ADP + phosphate + H(+). Its function is as follows. The RuvA-RuvB-RuvC complex processes Holliday junction (HJ) DNA during genetic recombination and DNA repair, while the RuvA-RuvB complex plays an important role in the rescue of blocked DNA replication forks via replication fork reversal (RFR). RuvA specifically binds to HJ cruciform DNA, conferring on it an open structure. The RuvB hexamer acts as an ATP-dependent pump, pulling dsDNA into and through the RuvAB complex. RuvB forms 2 homohexamers on either side of HJ DNA bound by 1 or 2 RuvA tetramers; 4 subunits per hexamer contact DNA at a time. Coordinated motions by a converter formed by DNA-disengaged RuvB subunits stimulates ATP hydrolysis and nucleotide exchange. Immobilization of the converter enables RuvB to convert the ATP-contained energy into a lever motion, pulling 2 nucleotides of DNA out of the RuvA tetramer per ATP hydrolyzed, thus driving DNA branch migration. The RuvB motors rotate together with the DNA substrate, which together with the progressing nucleotide cycle form the mechanistic basis for DNA recombination by continuous HJ branch migration. Branch migration allows RuvC to scan DNA until it finds its consensus sequence, where it cleaves and resolves cruciform DNA. This Leifsonia xyli subsp. xyli (strain CTCB07) protein is Holliday junction branch migration complex subunit RuvB.